The primary structure comprises 35 residues: Alpha-amanitin proprotein (35 aa).

A propeptide spanning residues 1–10 (MSDINATRLP) is cleaved from the precursor. Residue isoleucine 11 is modified to (3R,4R)-4,5-dihydroxyisoleucine; in form alpha-amanitin. Isoleucine 11 bears the (3R,4S)-4-hydroxyisoleucine; in form gamma-amanitin mark. The segment at residues 11 to 18 (IWGIGCNP) is a cross-link (cyclopeptide (Ile-Pro)). Residues 12-16 (WGIGC) constitute a cross-link (2'-cysteinyl-6'-hydroxytryptophan sulfoxide (Trp-Cys)). Proline 18 is modified (4-hydroxyproline). A propeptide spanning residues 19-35 (CVGDDVTTLLTRGEALC) is cleaved from the precursor.

It belongs to the MSDIN fungal toxin family. Post-translationally, processed by the macrocyclase-peptidase enzyme POPB to yield a toxic cyclic decapeptide. POPB first removes 10 residues from the N-terminus. Conformational trapping of the remaining peptide forces the enzyme to release this intermediate rather than proceed to macrocyclization. The enzyme rebinds the remaining peptide in a different conformation and catalyzes macrocyclization of the N-terminal 8 residues.

Major toxin belonging to the bicyclic octapeptides amatoxins that acts by binding non-competitively to RNA polymerase II and greatly slowing the elongation of transcripts from target promoters. In Amanita bisporigera (Destroying angel), this protein is Alpha-amanitin proprotein.